A 98-amino-acid polypeptide reads, in one-letter code: Large ribosomal subunit protein uL23 (98 aa).

This sequence belongs to the universal ribosomal protein uL23 family. Part of the 50S ribosomal subunit. Contacts protein L29, and trigger factor when it is bound to the ribosome.

In terms of biological role, one of the early assembly proteins it binds 23S rRNA. One of the proteins that surrounds the polypeptide exit tunnel on the outside of the ribosome. Forms the main docking site for trigger factor binding to the ribosome. This chain is Large ribosomal subunit protein uL23, found in Methylobacterium radiotolerans (strain ATCC 27329 / DSM 1819 / JCM 2831 / NBRC 15690 / NCIMB 10815 / 0-1).